A 540-amino-acid chain; its full sequence is Protein PALS2 (540 aa).

2 L27 domains span residues 1–48 (MQQV…EDSK) and 49–107 (LEAV…YDSP). A PDZ domain is found at 130-209 (ILGIHKRAGE…SVTLKILPSY (80 aa)). The SH3 domain maps to 215–284 (PQQVFVKCHF…PSQFLEEKRK (70 aa)). The 188-residue stretch at 338 to 525 (RKTLVLIGAQ…AFEKLQTAIE (188 aa)) folds into the Guanylate kinase-like domain. At tyrosine 500 the chain carries Phosphotyrosine.

It belongs to the MAGUK family. As to quaternary structure, interacts with CADM1. Interacts with the LIN7 proteins. In terms of tissue distribution, abundant in testis, brain, and kidney with lower levels detectable in other tissues.

Its subcellular location is the membrane. The protein is Protein PALS2 of Homo sapiens (Human).